Here is a 270-residue protein sequence, read N- to C-terminus: Formamidopyrimidine-DNA glycosylase (270 aa).

Proline 2 acts as the Schiff-base intermediate with DNA in catalysis. Glutamate 3 functions as the Proton donor in the catalytic mechanism. The Proton donor; for beta-elimination activity role is filled by lysine 57. Residues histidine 90, arginine 109, and lysine 151 each contribute to the DNA site. An FPG-type zinc finger spans residues 236-270 (RVYGRKGQACEVCESEIQSVTLGQRNTFFCEQCQK). The active-site Proton donor; for delta-elimination activity is arginine 260.

It belongs to the FPG family. In terms of assembly, monomer. It depends on Zn(2+) as a cofactor.

The enzyme catalyses Hydrolysis of DNA containing ring-opened 7-methylguanine residues, releasing 2,6-diamino-4-hydroxy-5-(N-methyl)formamidopyrimidine.. It carries out the reaction 2'-deoxyribonucleotide-(2'-deoxyribose 5'-phosphate)-2'-deoxyribonucleotide-DNA = a 3'-end 2'-deoxyribonucleotide-(2,3-dehydro-2,3-deoxyribose 5'-phosphate)-DNA + a 5'-end 5'-phospho-2'-deoxyribonucleoside-DNA + H(+). Functionally, involved in base excision repair of DNA damaged by oxidation or by mutagenic agents. Acts as a DNA glycosylase that recognizes and removes damaged bases. Has a preference for oxidized purines, such as 7,8-dihydro-8-oxoguanine (8-oxoG). Has AP (apurinic/apyrimidinic) lyase activity and introduces nicks in the DNA strand. Cleaves the DNA backbone by beta-delta elimination to generate a single-strand break at the site of the removed base with both 3'- and 5'-phosphates. This Pseudoalteromonas atlantica (strain T6c / ATCC BAA-1087) protein is Formamidopyrimidine-DNA glycosylase.